The following is a 387-amino-acid chain: Protein ERD1 homolog 2 (387 aa).

8 helical membrane passes run 20 to 40 (IGLL…LIYI), 92 to 112 (AGYC…ILFL), 126 to 146 (PIYP…PFPW), 177 to 197 (FIVS…YIFG), 217 to 237 (GTFF…LQCL), 252 to 272 (LLSA…AIIH), 285 to 305 (GYLF…TFLW), and 326 to 346 (FPMF…VTWS). The region spanning 212 to 387 (DLKCDGTFFV…LFFHLDAISS (176 aa)) is the EXS domain.

Belongs to the ERD1 family.

It localises to the membrane. The chain is Protein ERD1 homolog 2 from Schizosaccharomyces pombe (strain 972 / ATCC 24843) (Fission yeast).